A 130-amino-acid polypeptide reads, in one-letter code: Protein BLT4 (130 aa).

The first 25 residues, 1-25, serve as a signal peptide directing secretion; sequence MARTAATKLALVPLVAAMLLVAADA. The tract at residues 80–130 is disordered; sequence VPARTTPAGPQASPPGAASASPTRSAPVSTALRSTDRTRAPHISSDRRLVG. Positions 84–110 are enriched in low complexity; that stretch reads TTPAGPQASPPGAASASPTRSAPVSTA. A compositionally biased stretch (basic and acidic residues) spans 113–130; it reads STDRTRAPHISSDRRLVG.

Belongs to the plant LTP family. Shoot meristem.

Its function is as follows. Possible dehydrative stress responsive protein. Not shown to have lipid transfer activity. This chain is Protein BLT4 (BLT4), found in Hordeum vulgare (Barley).